The sequence spans 152 residues: Small heat shock protein HspA (152 aa).

The sHSP domain maps to 29 to 139 (TAGEANYPPC…KPRRIPIDNL (111 aa)).

Belongs to the small heat shock protein (HSP20) family.

The sequence is that of Small heat shock protein HspA (hspA) from Bradyrhizobium diazoefficiens (strain JCM 10833 / BCRC 13528 / IAM 13628 / NBRC 14792 / USDA 110).